The sequence spans 112 residues: Large ribosomal subunit protein eL30x (112 aa).

It belongs to the eukaryotic ribosomal protein eL30 family.

The sequence is that of Large ribosomal subunit protein eL30x (RPL30C) from Arabidopsis thaliana (Mouse-ear cress).